An 833-amino-acid chain; its full sequence is Leucine--tRNA ligase (833 aa).

The short motif at 41-52 (PYPSGAGLHVGH) is the 'HIGH' region element. The 'KMSKS' region motif lies at 610 to 614 (KMSKS). Lysine 613 lines the ATP pocket.

This sequence belongs to the class-I aminoacyl-tRNA synthetase family.

Its subcellular location is the cytoplasm. It catalyses the reaction tRNA(Leu) + L-leucine + ATP = L-leucyl-tRNA(Leu) + AMP + diphosphate. The polypeptide is Leucine--tRNA ligase (Streptococcus suis (strain 05ZYH33)).